Reading from the N-terminus, the 485-residue chain is 6-phosphogluconate dehydrogenase, decarboxylating (485 aa).

NADP(+) contacts are provided by residues 12-17 (GLAVMG), 35-37 (NRT), 77-79 (VKA), and asparagine 105. Substrate contacts are provided by residues asparagine 105 and 131–133 (SGG). The Proton acceptor role is filled by lysine 186. 189-190 (HN) provides a ligand contact to substrate. Catalysis depends on glutamate 193, which acts as the Proton donor. Substrate-binding residues include tyrosine 194, lysine 263, arginine 290, arginine 449, and histidine 455.

It belongs to the 6-phosphogluconate dehydrogenase family. In terms of assembly, homodimer.

The enzyme catalyses 6-phospho-D-gluconate + NADP(+) = D-ribulose 5-phosphate + CO2 + NADPH. It functions in the pathway carbohydrate degradation; pentose phosphate pathway; D-ribulose 5-phosphate from D-glucose 6-phosphate (oxidative stage): step 3/3. Its function is as follows. Catalyzes the oxidative decarboxylation of 6-phosphogluconate to ribulose 5-phosphate and CO(2), with concomitant reduction of NADP to NADPH. The protein is 6-phosphogluconate dehydrogenase, decarboxylating (6-PGD) of Cunninghamella elegans.